We begin with the raw amino-acid sequence, 351 residues long: Ribosomal RNA large subunit methyltransferase M (351 aa).

Residues Ser-183, 216–219, Asp-235, Asp-255, and Asp-271 each bind S-adenosyl-L-methionine; that span reads APGG. The active-site Proton acceptor is Lys-300.

This sequence belongs to the class I-like SAM-binding methyltransferase superfamily. RNA methyltransferase RlmE family. RlmM subfamily. As to quaternary structure, monomer.

Its subcellular location is the cytoplasm. The enzyme catalyses cytidine(2498) in 23S rRNA + S-adenosyl-L-methionine = 2'-O-methylcytidine(2498) in 23S rRNA + S-adenosyl-L-homocysteine + H(+). Functionally, catalyzes the 2'-O-methylation at nucleotide C2498 in 23S rRNA. This chain is Ribosomal RNA large subunit methyltransferase M, found in Ectopseudomonas mendocina (strain ymp) (Pseudomonas mendocina).